The following is a 713-amino-acid chain: Pro-neuregulin-3, membrane-bound isoform (713 aa).

Residues 1-362 (MSEGAAGASP…MESEDVYQRQ (362 aa)) are Extracellular-facing. 3 disordered regions span residues 28 to 48 (AAAA…AAEP), 119 to 220 (SSFP…STQA), and 251 to 282 (AAAS…TTYS). A compositionally biased stretch (gly residues) spans 34 to 44 (AGGGPDGGGEG). The segment covering 127–148 (TTTTTTSTTSPATPSAGGAASS) has biased composition (low complexity). A compositionally biased stretch (polar residues) spans 149–163 (RTPNRISTRLTTITR). Low complexity-rich tracts occupy residues 195 to 207 (STTA…STPG) and 254 to 274 (SSSS…STSP). The 44-residue stretch at 288–331 (HFKPCRDKDLAYCLNDGECFVIETLTGSHKHCRCKEGYQGVRCD) folds into the EGF-like domain. Cystine bridges form between C292-C306, C300-C319, and C321-C330. A helical membrane pass occupies residues 363–383 (VLSISCIIFGIVIVGMFCAAF). Residues 384-713 (YFKSKKQAKQ…EIQRDSVLTK (330 aa)) lie on the Cytoplasmic side of the membrane. The segment at 449–496 (SAPQSFPEVTSPDRGSQPIKHHSPGQRSGMLHRNTFRRAPPSPRSRLG) is disordered.

This sequence belongs to the neuregulin family. In terms of assembly, interacts with ERBB4. In terms of processing, proteolytic cleavage close to the plasma membrane on the external face leads to the release of the soluble growth factor form. Post-translationally, extensive glycosylation precedes the proteolytic cleavage. As to expression, expressed in sympathetic, motor, and sensory neurons.

It is found in the cell membrane. It localises to the secreted. Its function is as follows. Direct ligand for the ERBB4 tyrosine kinase receptor. Binding results in ligand-stimulated tyrosine phosphorylation and activation of the receptor. Does not bind to the EGF receptor, ERBB2 or ERBB3 receptors. This chain is Pro-neuregulin-3, membrane-bound isoform (Nrg3), found in Mus musculus (Mouse).